A 448-amino-acid chain; its full sequence is Glutamate--tRNA ligase 1 (448 aa).

A 'HIGH' region motif is present at residues 9–19 (PSPTGKLHIGN). Positions 240 to 244 (KISKR) match the 'KMSKS' region motif. An ATP-binding site is contributed by K243.

The protein belongs to the class-I aminoacyl-tRNA synthetase family. Glutamate--tRNA ligase type 1 subfamily. Monomer.

Its subcellular location is the cytoplasm. It catalyses the reaction tRNA(Glu) + L-glutamate + ATP = L-glutamyl-tRNA(Glu) + AMP + diphosphate. Its function is as follows. Catalyzes the attachment of glutamate to tRNA(Glu) in a two-step reaction: glutamate is first activated by ATP to form Glu-AMP and then transferred to the acceptor end of tRNA(Glu). This is Glutamate--tRNA ligase 1 from Orientia tsutsugamushi (strain Ikeda) (Rickettsia tsutsugamushi).